The primary structure comprises 789 residues: Molybdenum cofactor sulfurase (789 aa).

Lys-251 carries the post-translational modification N6-(pyridoxal phosphate)lysine. Cys-422 is a catalytic residue. Residues 628–789 (GDQVAQWLDQ…LICGETLEVD (162 aa)) form the MOSC domain. Position 741 is a phosphoserine (Ser-741).

It belongs to the class-V pyridoxal-phosphate-dependent aminotransferase family. MOCOS subfamily. Pyridoxal 5'-phosphate serves as cofactor.

It carries out the reaction Mo-molybdopterin + L-cysteine + AH2 = thio-Mo-molybdopterin + L-alanine + A + H2O. Its pathway is cofactor biosynthesis; molybdopterin biosynthesis. In terms of biological role, sulfurates the molybdenum cofactor. Sulfation of molybdenum is essential for xanthine dehydrogenase (XDH) and aldehyde oxidase (ADO) enzymes in which molybdenum cofactor is liganded by 1 oxygen and 1 sulfur atom in active form. The polypeptide is Molybdenum cofactor sulfurase (Drosophila willistoni (Fruit fly)).